Reading from the N-terminus, the 763-residue chain is Actin filament-associated protein 1-like 1 (763 aa).

A disordered region spans residues 83–137 (LQDMPEDEAESCKAASPEPAKSPSLRHTADLPPPLPNRPPPEDYYEEALPLGPGK). Residues S98, S104, and S153 each carry the phosphoserine modification. The disordered stretch occupies residues 169 to 210 (TRMNGELKNSYNDSDAMSSSYESYDEEEEEGKGPQPTHQWPS). Over residues 175-185 (LKNSYNDSDAM) the composition is skewed to polar residues. The PH 1 domain occupies 220–316 (DCRICAFLLR…WLKVIREVSK (97 aa)). Phosphoserine is present on residues S329 and S343. Residues 343–380 (SQEKQTSDSDSLGMGDSCSTLGREHGKGKKSSLSELKG) form a disordered region. The 95-residue stretch at 413-507 (EVPCCGYLNV…WLGLLLVEMG (95 aa)) folds into the PH 2 domain. Y552 carries the post-translational modification Phosphotyrosine. Residues 561-604 (QDEEPERPPGAQVKRHASTCSEKSHRVDPQVKVKRHASSAHQYK) are disordered. Basic and acidic residues predominate over residues 582–591 (EKSHRVDPQV). Residues 606-694 (GKNRAEEDAR…LVTVKERLQQ (89 aa)) adopt a coiled-coil conformation. Positions 712–724 (SGETANKPQNNVP) are enriched in polar residues. The tract at residues 712-763 (SGETANKPQNNVPEQPLPVNCVSELRKRSPSIINSNQGRVLQKAKEWEMKKT) is disordered. Phosphoserine is present on S742. The segment covering 754–763 (KAKEWEMKKT) has biased composition (basic and acidic residues).

Interacts with CTTN.

Its subcellular location is the cytoplasm. It localises to the cell projection. It is found in the podosome. The protein localises to the invadopodium. The protein resides in the cytoskeleton. Its subcellular location is the stress fiber. In terms of biological role, may be involved in podosome and invadosome formation. The sequence is that of Actin filament-associated protein 1-like 1 (AFAP1L1) from Bos taurus (Bovine).